The chain runs to 265 residues: Phosphatidylglycerol--prolipoprotein diacylglyceryl transferase (265 aa).

4 helical membrane passes run valine 10–isoleucine 30, leucine 56–tyrosine 76, leucine 87–leucine 107, and glycine 117–alanine 137. An a 1,2-diacyl-sn-glycero-3-phospho-(1'-sn-glycerol)-binding site is contributed by arginine 139. 3 consecutive transmembrane segments (helical) span residues proline 172 to tyrosine 192, methionine 200 to valine 220, and leucine 227 to leucine 247.

Belongs to the Lgt family.

The protein resides in the cell inner membrane. It carries out the reaction L-cysteinyl-[prolipoprotein] + a 1,2-diacyl-sn-glycero-3-phospho-(1'-sn-glycerol) = an S-1,2-diacyl-sn-glyceryl-L-cysteinyl-[prolipoprotein] + sn-glycerol 1-phosphate + H(+). Its pathway is protein modification; lipoprotein biosynthesis (diacylglyceryl transfer). Catalyzes the transfer of the diacylglyceryl group from phosphatidylglycerol to the sulfhydryl group of the N-terminal cysteine of a prolipoprotein, the first step in the formation of mature lipoproteins. This Azotobacter vinelandii (strain DJ / ATCC BAA-1303) protein is Phosphatidylglycerol--prolipoprotein diacylglyceryl transferase.